Reading from the N-terminus, the 118-residue chain is Ribosome-binding factor A (118 aa).

It belongs to the RbfA family. As to quaternary structure, monomer. Binds 30S ribosomal subunits, but not 50S ribosomal subunits or 70S ribosomes.

The protein localises to the cytoplasm. Functionally, one of several proteins that assist in the late maturation steps of the functional core of the 30S ribosomal subunit. Associates with free 30S ribosomal subunits (but not with 30S subunits that are part of 70S ribosomes or polysomes). Required for efficient processing of 16S rRNA. May interact with the 5'-terminal helix region of 16S rRNA. The polypeptide is Ribosome-binding factor A (Shouchella clausii (strain KSM-K16) (Alkalihalobacillus clausii)).